Reading from the N-terminus, the 432-residue chain is Adenylosuccinate synthetase (432 aa).

GTP-binding positions include 12–18 and 40–42; these read GDEGKGK and GHT. Catalysis depends on Asp-13, which acts as the Proton acceptor. Positions 13 and 40 each coordinate Mg(2+). Residues 13–16, 38–41, Thr-131, Arg-145, Gln-226, Thr-241, and Arg-305 contribute to the IMP site; these read DEGK and NAGH. The active-site Proton donor is the His-41. A substrate-binding site is contributed by 301 to 307; the sequence is ATTGRPR. Residues Arg-307, 333–335, and 415–417 each bind GTP; these read KLD and STG.

This sequence belongs to the adenylosuccinate synthetase family. In terms of assembly, homodimer. Mg(2+) serves as cofactor.

It is found in the cytoplasm. It carries out the reaction IMP + L-aspartate + GTP = N(6)-(1,2-dicarboxyethyl)-AMP + GDP + phosphate + 2 H(+). Its pathway is purine metabolism; AMP biosynthesis via de novo pathway; AMP from IMP: step 1/2. Plays an important role in the de novo pathway of purine nucleotide biosynthesis. Catalyzes the first committed step in the biosynthesis of AMP from IMP. This is Adenylosuccinate synthetase from Magnetococcus marinus (strain ATCC BAA-1437 / JCM 17883 / MC-1).